The chain runs to 303 residues: Oxygen-dependent coproporphyrinogen-III oxidase (303 aa).

Ser93 serves as a coordination point for substrate. Positions 97 and 107 each coordinate a divalent metal cation. His107 (proton donor) is an active-site residue. 109 to 111 (NVR) is a binding site for substrate. Positions 146 and 176 each coordinate a divalent metal cation. The tract at residues 241–276 (YVEFNLVYDRGTLFGLQSGGRTESILMSLPPQVRWG) is important for dimerization. 259-261 (GGR) lines the substrate pocket.

This sequence belongs to the aerobic coproporphyrinogen-III oxidase family. In terms of assembly, homodimer. It depends on a divalent metal cation as a cofactor.

It is found in the cytoplasm. It carries out the reaction coproporphyrinogen III + O2 + 2 H(+) = protoporphyrinogen IX + 2 CO2 + 2 H2O. Its pathway is porphyrin-containing compound metabolism; protoporphyrin-IX biosynthesis; protoporphyrinogen-IX from coproporphyrinogen-III (O2 route): step 1/1. Its function is as follows. Involved in the heme biosynthesis. Catalyzes the aerobic oxidative decarboxylation of propionate groups of rings A and B of coproporphyrinogen-III to yield the vinyl groups in protoporphyrinogen-IX. The protein is Oxygen-dependent coproporphyrinogen-III oxidase of Pseudomonas entomophila (strain L48).